A 61-amino-acid polypeptide reads, in one-letter code: Large ribosomal subunit protein uL30 (61 aa).

Belongs to the universal ribosomal protein uL30 family. In terms of assembly, part of the 50S ribosomal subunit.

This is Large ribosomal subunit protein uL30 from Parafrankia sp. (strain EAN1pec).